The following is a 72-amino-acid chain: Probable transcription factor elt-4 (72 aa).

The GATA-type zinc finger occupies 16 to 40 (CSNCNGTNTTLWRRKAEGDPVCNAC).

Its subcellular location is the nucleus. Probable transcription factor. Plays a role in regulating heme-dependent expression of heme transporter hrg-1. Modulates lifespan in a daf-16-dependent manner. This is Probable transcription factor elt-4 from Caenorhabditis elegans.